The following is a 104-amino-acid chain: MIRKAFVMQVNPDAHEEYQRRHNPIWPELEAVLKSHGAHNYAIYLDKARNLLFATVEIESEERWNAVASTDVCQRWWKYMTDVMPANPDNSPVSSELQEVFYLP.

Y18 is a binding site for substrate. The active-site Proton donor is H22. Residues Y41 and 76–77 (WW) contribute to the substrate site.

The protein belongs to the rhamnose mutarotase family. As to quaternary structure, homodimer.

The protein resides in the cytoplasm. It carries out the reaction alpha-L-rhamnose = beta-L-rhamnose. It functions in the pathway carbohydrate metabolism; L-rhamnose metabolism. Functionally, involved in the anomeric conversion of L-rhamnose. This chain is L-rhamnose mutarotase, found in Shigella sonnei (strain Ss046).